Reading from the N-terminus, the 265-residue chain is 3-methyl-2-oxobutanoate hydroxymethyltransferase (265 aa).

Positions 43 and 82 each coordinate Mg(2+). Residues 43–44 (DS), Asp82, and Lys111 each bind 3-methyl-2-oxobutanoate. Glu113 lines the Mg(2+) pocket. Residue Glu180 is the Proton acceptor of the active site.

The protein belongs to the PanB family. Homodecamer; pentamer of dimers. It depends on Mg(2+) as a cofactor.

The protein resides in the cytoplasm. It carries out the reaction 3-methyl-2-oxobutanoate + (6R)-5,10-methylene-5,6,7,8-tetrahydrofolate + H2O = 2-dehydropantoate + (6S)-5,6,7,8-tetrahydrofolate. Its pathway is cofactor biosynthesis; (R)-pantothenate biosynthesis; (R)-pantoate from 3-methyl-2-oxobutanoate: step 1/2. In terms of biological role, catalyzes the reversible reaction in which hydroxymethyl group from 5,10-methylenetetrahydrofolate is transferred onto alpha-ketoisovalerate to form ketopantoate. In Francisella tularensis subsp. mediasiatica (strain FSC147), this protein is 3-methyl-2-oxobutanoate hydroxymethyltransferase.